Reading from the N-terminus, the 233-residue chain is Small ribosomal subunit protein uS2 (233 aa).

It belongs to the universal ribosomal protein uS2 family.

This chain is Small ribosomal subunit protein uS2, found in Bacillus anthracis.